The sequence spans 447 residues: NAD-dependent histone deacetylase HST3 (447 aa).

Positions 1–21 (MTSVSPSPPASRSGSMCSDLP) are disordered. The Deacetylase sirtuin-type domain occupies 35-363 (LDADDEVLRR…IKKLRQLKRE (329 aa)). Residues 60 to 79 (GAGISCNAGIPDFRSSDGLY) and 151 to 154 (QNID) each bind NAD(+). H187 serves as the catalytic Proton acceptor. Zn(2+) is bound by residues C195, C198, C220, and C223. NAD(+) is bound by residues 282-284 (GTS), 312-314 (NKT), and C333. The span at 365 to 375 (SDLRKQMKAQK) shows a compositional bias: basic and acidic residues. Disordered stretches follow at residues 365-393 (SDLRKQMKAQKDSIGTPPTTPLRTAQGID) and 411-447 (KRKILSPENSSEEDEEENLDTRKRAKIRPTFGDNQAS).

This sequence belongs to the sirtuin family. Class I subfamily. The cofactor is Zn(2+).

It is found in the cytoplasm. Its subcellular location is the nucleus. The enzyme catalyses N(6)-acetyl-L-lysyl-[protein] + NAD(+) + H2O = 2''-O-acetyl-ADP-D-ribose + nicotinamide + L-lysyl-[protein]. Its function is as follows. NAD-dependent histone deacetylase, which contributes together with HST4 to histone H3 'Lys-56' deacetylation, regulation of telomeric silencing, proper cell cycle progression, DNA damage control, DNA recombination, and genomic maintenance. This chain is NAD-dependent histone deacetylase HST3 (HST3), found in Saccharomyces cerevisiae (strain ATCC 204508 / S288c) (Baker's yeast).